Here is a 251-residue protein sequence, read N- to C-terminus: Phosphosulfolactate synthase (251 aa).

It belongs to the phosphosulfolactate synthase family. In terms of assembly, homotrimer. Requires Mg(2+) as cofactor.

It catalyses the reaction (2R)-O-phospho-3-sulfolactate = phosphoenolpyruvate + sulfite + H(+). It participates in cofactor biosynthesis; coenzyme M biosynthesis; sulfoacetaldehyde from phosphoenolpyruvate and sulfite: step 1/4. Its function is as follows. Catalyzes the addition of sulfite to phosphoenolpyruvate (PEP) to yield (2R)-phospho-3-sulfolactate (PSL). The polypeptide is Phosphosulfolactate synthase (comA) (Methanocaldococcus jannaschii (strain ATCC 43067 / DSM 2661 / JAL-1 / JCM 10045 / NBRC 100440) (Methanococcus jannaschii)).